The primary structure comprises 877 residues: MNEKYAALKSNVSMLGHLLGNTIQEAHGDEILEKVETIRKLSKSARAGNQADRNNLIEEIKSLPDEQLTPVARAFNQFLNLTNIAEQYHTISRHCDAHVCEPDAINTLFAKLGQNGINKLDTAQAIRELNIELVLTAHPTEITRRTMINKLVKINECLSKLELSDLSYKERHKTEKRLEQLIAQSWHSDVIRKQRPTPLDEAKWGFAVVENSLWEAVPDFLRELDEKLKDYLDQGLPIDARPVHFSSWMGGDRDGNPFVTHTVTREVLLLSRWKAADLYLKDINELISELSMTKCNDTVRQLAGEDEHEPYRAILKQLRTLLSDTKEILDAKINGQKLAVKAPLQSVEQLWDPLFACYQSLRECGMSMIAEGSLLDTLRRVKAFGVHLVRLDIRQESTRHADVLSELTRYLGIGDYNHWSEQDKIAFLTNELASKRPLLPRDWQPSEQVKEVLDTCKIIAAQSREAFGAYVISMAKTASDVLAVHLLLQESGCPYRMDVCPLFETLDDLNNAEAVIKQLMSIDLYRGFIQNHQMVMIGYSDSAKDAGVMAAGWAQYHAMEALVNVAEQEGIELTLFHGRGGTIGRGGAPAHAALLSQPPKSLKGGLRVTEQGEMIRFKLGLPDVAVNSFNMYASAILEANLLPPPEPKQEWRDLMEVLSQVSCEAYRSVVRGEPDFVPYFRQATPELELGKLPLGSRPAKRNPNGGVESLRAIPWIFSWSQNRLLLPAWLGAGEAIQYSIDKGHQALLEEMCREWPFFSTRLGMLEMVYLKCNSEISRYYDERLADKSLLPLGDRLRDQLQSDIKAVLNVENNENLMQSDPWGQESIRLRNIYIEPLNMLQAELLYRTRQAGVVSEALEEALMVTIAGIAAGMRNTG.

Catalysis depends on residues His-138 and Lys-544.

It belongs to the PEPCase type 1 family. Mg(2+) is required as a cofactor.

It catalyses the reaction oxaloacetate + phosphate = phosphoenolpyruvate + hydrogencarbonate. Forms oxaloacetate, a four-carbon dicarboxylic acid source for the tricarboxylic acid cycle. The chain is Phosphoenolpyruvate carboxylase from Vibrio vulnificus (strain CMCP6).